The sequence spans 503 residues: uncharacterized protein (503 aa).

Residues 437-465 (LNKDLILENLIETENENDKQEFQKLLRTI) are a coiled coil.

Belongs to the IIV-6 467R family.

This is an uncharacterized protein from Invertebrate iridescent virus 6 (IIV-6).